Consider the following 144-residue polypeptide: Granulocyte-macrophage colony-stimulating factor (144 aa).

Residues 1 to 17 form the signal peptide; the sequence is MWLQNLLFLGTVVCSIS. The O-linked (GalNAc...) serine glycan is linked to Ser22. A glycan (O-linked (GalNAc...) threonine) is linked at Thr27. N-linked (GlcNAc...) asparagine glycosylation is present at Asn44. Cystine bridges form between Cys71-Cys113 and Cys105-Cys138.

It belongs to the GM-CSF family. In terms of assembly, monomer. The signaling GM-CSF receptor complex is a dodecamer of two head-to-head hexamers of two alpha, two beta, and two ligand subunits.

It is found in the secreted. In terms of biological role, cytokine that stimulates the growth and differentiation of hematopoietic precursor cells from various lineages, including granulocytes, macrophages, eosinophils and erythrocytes. This is Granulocyte-macrophage colony-stimulating factor (CSF2) from Canis lupus familiaris (Dog).